A 162-amino-acid chain; its full sequence is MVSTRKEGASAGEPVTGARVLIVEGRYYEALADELLAGARAALEAAGATVDVITVPGALEIPIAAEIALEAAEEEDEPYEAVVALGCVIRGETYHFEIVAGESSRGLMDLALAHALPLGNGILTVETEAQAWERARVGEGNKGGGAAEAALSLVRLKRRGLK.

5-amino-6-(D-ribitylamino)uracil contacts are provided by residues Tyr27, 58–60, and 87–89; these read ALE and CVI. Position 92-93 (92-93) interacts with (2S)-2-hydroxy-3-oxobutyl phosphate; it reads ET. His95 acts as the Proton donor in catalysis. Asn120 serves as a coordination point for 5-amino-6-(D-ribitylamino)uracil. Arg134 provides a ligand contact to (2S)-2-hydroxy-3-oxobutyl phosphate.

It belongs to the DMRL synthase family.

It carries out the reaction (2S)-2-hydroxy-3-oxobutyl phosphate + 5-amino-6-(D-ribitylamino)uracil = 6,7-dimethyl-8-(1-D-ribityl)lumazine + phosphate + 2 H2O + H(+). It participates in cofactor biosynthesis; riboflavin biosynthesis; riboflavin from 2-hydroxy-3-oxobutyl phosphate and 5-amino-6-(D-ribitylamino)uracil: step 1/2. Functionally, catalyzes the formation of 6,7-dimethyl-8-ribityllumazine by condensation of 5-amino-6-(D-ribitylamino)uracil with 3,4-dihydroxy-2-butanone 4-phosphate. This is the penultimate step in the biosynthesis of riboflavin. This is 6,7-dimethyl-8-ribityllumazine synthase from Azorhizobium caulinodans (strain ATCC 43989 / DSM 5975 / JCM 20966 / LMG 6465 / NBRC 14845 / NCIMB 13405 / ORS 571).